The chain runs to 323 residues: MTKIITHLLNPLAVIIPILLAVAFLTLIERKVLGYMQLRKGPNIVGPYGLLQPLADGLKLFIKEPVRPSTSSPLLFITTPMLALTMALTLWLPLPLPHPMTNLNLGMLFILAISSLTVYSILGSGWASNLKYALIGALRAVAQTISYEVSLGLILLAMIIFAGGFTLTTFNTSQETIWLLTPGWPLAAMWYISTLAETNRAPFDLTEGESELVSGFNVEYAGGPFALFFLAEYANILLMNTLSTILFMGAMHNPITPELTSINLMIKASALSMLFLWVRASYPRFRYDQLMHLVWKNFLPITLAMILWHTSLPIFTGSLPPQT.

8 helical membrane-spanning segments follow: residues 8–28, 74–94, 105–125, 150–170, 176–196, 227–247, 258–278, and 298–318; these read LLNPLAVIIPILLAVAFLTLI, LLFITTPMLALTMALTLWLPL, LGMLFILAISSLTVYSILGSG, SLGLILLAMIIFAGGFTLTTF, TIWLLTPGWPLAAMWYISTLA, LFFLAEYANILLMNTLSTILF, ELTSINLMIKASALSMLFLWV, and FLPITLAMILWHTSLPIFTGS.

It belongs to the complex I subunit 1 family.

The protein resides in the mitochondrion inner membrane. The catalysed reaction is a ubiquinone + NADH + 5 H(+)(in) = a ubiquinol + NAD(+) + 4 H(+)(out). Core subunit of the mitochondrial membrane respiratory chain NADH dehydrogenase (Complex I) that is believed to belong to the minimal assembly required for catalysis. Complex I functions in the transfer of electrons from NADH to the respiratory chain. The immediate electron acceptor for the enzyme is believed to be ubiquinone. The protein is NADH-ubiquinone oxidoreductase chain 1 (MT-ND1) of Latimeria chalumnae (Coelacanth).